The sequence spans 438 residues: MKLWGGRFKKSESKLMEDFNSSLSFDRQLYKEDIEGSMVHVKMLAKCNILSSEESKAILSGLESILKDIEEGKLEVEGDYEDIHSFVEINLIERIGQVAKKLHTARSRNDQVALDFRLYAKRKALEVVENIEYLQDVIENLGDKNNVIMPGYTHLQRAQVVTFKHHIMAYYHMFKRDRERILNAICIMDESPLGCCALAGTTYNIDRNFTAQELGFKKPVDNFLDGVSDRDYVIELISDFSIIMMHLSRLSEELILWSSKEFDFIRIDDEFSTGSSIMPQKKNPDAAELIRGKTGRVYGSLVSLLTTMKGIPLAYNKDMQEDKEQLFNSLDTVLSCLKIMSGMLSTLKVNEKNTFNAVKKGFLNATEAADYLVNKGMAFRDAHKVIGEIVLYCEDKNRAIEDISLDELKKFSSLFEEDVYDFIDYENTINRGIKRNLK.

The protein belongs to the lyase 1 family. Argininosuccinate lyase subfamily.

The protein localises to the cytoplasm. It catalyses the reaction 2-(N(omega)-L-arginino)succinate = fumarate + L-arginine. The protein operates within amino-acid biosynthesis; L-arginine biosynthesis; L-arginine from L-ornithine and carbamoyl phosphate: step 3/3. This chain is Argininosuccinate lyase, found in Clostridium kluyveri (strain NBRC 12016).